Reading from the N-terminus, the 604-residue chain is Lipoma-preferred partner homolog (604 aa).

2 disordered regions span residues 31–96 (TPSI…LDDV) and 129–381 (DLES…AFRP). The span at 32-41 (PSISVSTQQT) shows a compositional bias: polar residues. Composition is skewed to low complexity over residues 42 to 53 (PKKFAPVVAPKP) and 143 to 161 (GSGTSSSAATTPSVSTPVT). A compositionally biased stretch (polar residues) spans 207 to 226 (SYTTASTPSRPTFNVQVRTA). Residues 365–377 (SGYPSSGPTSSTP) show a composition bias toward low complexity. LIM zinc-binding domains follow at residues 406–465 (GRCA…INTL), 466–526 (EQCS…KFAP), and 527–595 (RCSV…RIQA).

It belongs to the zyxin/ajuba family.

It localises to the nucleus. The protein localises to the cytoplasm. It is found in the cell junction. Its function is as follows. May play a structural role at sites of cell adhesion in maintaining cell shape and motility. May be involved in signal transduction from cell adhesion sites to the nucleus. This chain is Lipoma-preferred partner homolog (LPP), found in Gallus gallus (Chicken).